A 142-amino-acid chain; its full sequence is Phenylalanine ammonia-lyase (142 aa).

Residues K66, E94, and N97 each coordinate (E)-cinnamate.

This sequence belongs to the PAL/histidase family. Homotetramer. Post-translationally, contains an active site 4-methylidene-imidazol-5-one (MIO), which is formed autocatalytically by cyclization and dehydration of residues Ala-Ser-Gly.

The protein localises to the cytoplasm. It catalyses the reaction L-phenylalanine = (E)-cinnamate + NH4(+). It functions in the pathway phenylpropanoid metabolism; trans-cinnamate biosynthesis; trans-cinnamate from L-phenylalanine: step 1/1. Its function is as follows. Catalyzes the non-oxidative deamination of L-phenylalanine to form trans-cinnamic acid and a free ammonium ion. Facilitates the commitment step in phenylpropanoid pathways that produce secondary metabolites such as lignins, coumarins and flavonoids. This is Phenylalanine ammonia-lyase (palA) from Agaricus bisporus (White button mushroom).